The following is a 443-amino-acid chain: Chromosomal replication initiator protein DnaA (443 aa).

Positions 1–76 are domain I, interacts with DnaA modulators; that stretch reads MMDAWPRCLE…GNGEVALAVG (76 aa). The segment at 76 to 105 is domain II; sequence GSRPRAPEPAPAPVAATIAPQAAPIAPFAG. Residues 106-323 form a domain III, AAA+ region region; sequence NLDSHYTFAN…GALNTLVARA (218 aa). 4 residues coordinate ATP: Gly151, Gly153, Lys154, and Thr155. Residues 324–443 are domain IV, binds dsDNA; sequence NFTGRSITVE…WEKLIRKLSE (120 aa).

It belongs to the DnaA family. As to quaternary structure, oligomerizes as a right-handed, spiral filament on DNA at oriC.

Its subcellular location is the cytoplasm. Its function is as follows. Plays an essential role in the initiation and regulation of chromosomal replication. ATP-DnaA binds to the origin of replication (oriC) to initiate formation of the DNA replication initiation complex once per cell cycle. Binds the DnaA box (a 9 base pair repeat at the origin) and separates the double-stranded (ds)DNA. Forms a right-handed helical filament on oriC DNA; dsDNA binds to the exterior of the filament while single-stranded (ss)DNA is stabiized in the filament's interior. The ATP-DnaA-oriC complex binds and stabilizes one strand of the AT-rich DNA unwinding element (DUE), permitting loading of DNA polymerase. After initiation quickly degrades to an ADP-DnaA complex that is not apt for DNA replication. Binds acidic phospholipids. The protein is Chromosomal replication initiator protein DnaA of Xanthomonas oryzae pv. oryzae (strain KACC10331 / KXO85).